A 511-amino-acid chain; its full sequence is Maturase K (511 aa).

It belongs to the intron maturase 2 family. MatK subfamily.

The protein localises to the plastid. The protein resides in the chloroplast. Functionally, usually encoded in the trnK tRNA gene intron. Probably assists in splicing its own and other chloroplast group II introns. This is Maturase K from Maihuenia poeppigii (Hardy cactus).